A 132-amino-acid chain; its full sequence is Histone H2A.1 (132 aa).

It belongs to the histone H2A family. In terms of assembly, the nucleosome is a histone octamer containing two molecules each of H2A, H2B, H3 and H4 assembled in one H3-H4 heterotetramer and two H2A-H2B heterodimers. The octamer wraps approximately 147 bp of DNA.

The protein localises to the nucleus. It is found in the chromosome. In terms of biological role, core component of nucleosome. Nucleosomes wrap and compact DNA into chromatin, limiting DNA accessibility to the cellular machineries which require DNA as a template. Histones thereby play a central role in transcription regulation, DNA repair, DNA replication and chromosomal stability. DNA accessibility is regulated via a complex set of post-translational modifications of histones, also called histone code, and nucleosome remodeling. This Leishmania infantum protein is Histone H2A.1.